We begin with the raw amino-acid sequence, 286 residues long: Putative sugar uptake protein lin0215 (286 aa).

Helical transmembrane passes span 4 to 26, 33 to 55, 114 to 136, 149 to 167, 177 to 194, 207 to 226, 230 to 252, and 264 to 283; these read MIALIPALLWGTVPLIITKFGGS, GMTLGALTFAVIVFFFTDPVYTL, LRIILGFIALALIVGGIFLTSYA, GLITLVISSLGYVGLVVLI, AILPQAIGMVLSALIMTH, LLLIIPGMIWAAGNVAMVHA, VGVATGFSLSQLGVVISTIGGIV, and LYVIVGVVLVVLGGILIGVA.

Belongs to the GRP transporter (TC 2.A.7.5) family.

It is found in the cell membrane. The protein is Putative sugar uptake protein lin0215 of Listeria innocua serovar 6a (strain ATCC BAA-680 / CLIP 11262).